Here is a 142-residue protein sequence, read N- to C-terminus: Large ribosomal subunit protein uL11 (142 aa).

It belongs to the universal ribosomal protein uL11 family. As to quaternary structure, part of the ribosomal stalk of the 50S ribosomal subunit. Interacts with L10 and the large rRNA to form the base of the stalk. L10 forms an elongated spine to which L12 dimers bind in a sequential fashion forming a multimeric L10(L12)X complex. Post-translationally, one or more lysine residues are methylated.

Forms part of the ribosomal stalk which helps the ribosome interact with GTP-bound translation factors. The chain is Large ribosomal subunit protein uL11 from Actinobacillus succinogenes (strain ATCC 55618 / DSM 22257 / CCUG 43843 / 130Z).